The sequence spans 524 residues: Light-independent protochlorophyllide reductase subunit B (524 aa).

Aspartate 36 contributes to the [4Fe-4S] cluster binding site. The Proton donor role is filled by aspartate 290. 425 to 426 (GL) serves as a coordination point for substrate.

It belongs to the ChlB/BchB/BchZ family. Protochlorophyllide reductase is composed of three subunits; ChlL, ChlN and ChlB. Forms a heterotetramer of two ChlB and two ChlN subunits. The cofactor is [4Fe-4S] cluster.

It catalyses the reaction chlorophyllide a + oxidized 2[4Fe-4S]-[ferredoxin] + 2 ADP + 2 phosphate = protochlorophyllide a + reduced 2[4Fe-4S]-[ferredoxin] + 2 ATP + 2 H2O. It functions in the pathway porphyrin-containing compound metabolism; chlorophyll biosynthesis (light-independent). In terms of biological role, component of the dark-operative protochlorophyllide reductase (DPOR) that uses Mg-ATP and reduced ferredoxin to reduce ring D of protochlorophyllide (Pchlide) to form chlorophyllide a (Chlide). This reaction is light-independent. The NB-protein (ChlN-ChlB) is the catalytic component of the complex. The sequence is that of Light-independent protochlorophyllide reductase subunit B from Parasynechococcus marenigrum (strain WH8102).